The chain runs to 221 residues: Ribosomal RNA large subunit methyltransferase E (221 aa).

Positions 60, 62, 89, 105, and 134 each coordinate S-adenosyl-L-methionine. Lys174 serves as the catalytic Proton acceptor.

The protein belongs to the class I-like SAM-binding methyltransferase superfamily. RNA methyltransferase RlmE family.

The protein resides in the cytoplasm. It carries out the reaction uridine(2552) in 23S rRNA + S-adenosyl-L-methionine = 2'-O-methyluridine(2552) in 23S rRNA + S-adenosyl-L-homocysteine + H(+). Specifically methylates the uridine in position 2552 of 23S rRNA at the 2'-O position of the ribose in the fully assembled 50S ribosomal subunit. The polypeptide is Ribosomal RNA large subunit methyltransferase E (Cupriavidus necator (strain ATCC 17699 / DSM 428 / KCTC 22496 / NCIMB 10442 / H16 / Stanier 337) (Ralstonia eutropha)).